The primary structure comprises 787 residues: Exocyst complex component SEC15B (787 aa).

This sequence belongs to the SEC15 family. The exocyst complex is composed of SEC3, SEC5, SEC6, SEC8, SEC10, EXO70A1 and EXO84B. Interacts with EXO84B. Binds to EXO70H1 AND EXO70B2. Binds directly to B1L.

The protein resides in the cytoplasm. It localises to the cytosol. Its subcellular location is the cytoskeleton. The protein localises to the phragmoplast. It is found in the secreted. The protein resides in the cell wall. It localises to the extracellular exosome. Functionally, component of the exocyst complex involved in the docking of exocytic vesicles with fusion sites on the plasma membrane during regulated or polarized secretion. Involved in polarized cell growth and organ morphogenesis. During cytokinesis, involved in cell plate initiation, cell plate maturation and formation of new primary cell wall. The protein is Exocyst complex component SEC15B of Arabidopsis thaliana (Mouse-ear cress).